The primary structure comprises 600 residues: UvrABC system protein C (600 aa).

A GIY-YIG domain is found at 15 to 100; it reads NSAGVYQYFN…IKQLHPKYNI (86 aa). The region spanning 203 to 238 is the UVR domain; it reads SILIKNLEKQMLVLAQNENYEEAAKVRDQIVTIKDL.

The protein belongs to the UvrC family. In terms of assembly, interacts with UvrB in an incision complex.

It localises to the cytoplasm. In terms of biological role, the UvrABC repair system catalyzes the recognition and processing of DNA lesions. UvrC both incises the 5' and 3' sides of the lesion. The N-terminal half is responsible for the 3' incision and the C-terminal half is responsible for the 5' incision. In Campylobacter jejuni subsp. jejuni serotype O:23/36 (strain 81-176), this protein is UvrABC system protein C.